The following is a 136-amino-acid chain: Cytidine deaminase (136 aa).

The region spanning 1-128 is the CMP/dCMP-type deaminase domain; the sequence is MNRQELITEA…ELLPGAFSSE (128 aa). 42-44 contacts substrate; the sequence is NIE. Cys53 lines the Zn(2+) pocket. Glu55 (proton donor) is an active-site residue. Residues Cys86 and Cys89 each coordinate Zn(2+).

The protein belongs to the cytidine and deoxycytidylate deaminase family. Homotetramer. Zn(2+) is required as a cofactor.

It carries out the reaction cytidine + H2O + H(+) = uridine + NH4(+). The enzyme catalyses 2'-deoxycytidine + H2O + H(+) = 2'-deoxyuridine + NH4(+). This enzyme scavenges exogenous and endogenous cytidine and 2'-deoxycytidine for UMP synthesis. The polypeptide is Cytidine deaminase (cdd) (Bacillus subtilis (strain 168)).